Here is a 457-residue protein sequence, read N- to C-terminus: RuvB-like helicase 1 (457 aa).

73 to 80 (GGPSTGKT) is a binding site for ATP.

It belongs to the RuvB family. In terms of assembly, may form heterododecamers with RVB2. Component of the SWR1 chromatin remodeling complex, the INO80 chromatin remodeling complex, and of the R2TP complex.

The protein resides in the nucleus. The enzyme catalyses ATP + H2O = ADP + phosphate + H(+). In terms of biological role, DNA helicase which participates in several chromatin remodeling complexes, including the SWR1 and the INO80 complexes. The SWR1 complex mediates the ATP-dependent exchange of histone H2A for the H2A variant HZT1 leading to transcriptional regulation of selected genes by chromatin remodeling. The INO80 complex remodels chromatin by shifting nucleosomes and is involved in DNA repair. Also involved in pre-rRNA processing. This Kluyveromyces lactis (strain ATCC 8585 / CBS 2359 / DSM 70799 / NBRC 1267 / NRRL Y-1140 / WM37) (Yeast) protein is RuvB-like helicase 1 (RVB1).